A 403-amino-acid chain; its full sequence is Coiled-coil domain-containing glutamate-rich protein 1 (403 aa).

Basic and acidic residues predominate over residues 1–11 (MTQTVNEREDP). Disordered regions lie at residues 1-23 (MTQT…ASSI), 51-70 (IEYE…GSWF), 134-164 (RPPG…PPID), 202-241 (QQEK…VEED), and 261-350 (PALM…GEQR). The segment covering 137–157 (GRKKRWGRRGRGLRRHPRRSF) has biased composition (basic residues). Low complexity predominate over residues 209–220 (QQAALRAQQAQE). A compositionally biased stretch (polar residues) spans 261-271 (PALMQHNQSPT). The segment covering 275–346 (VEEEEKNVDD…YMLEETGLEE (72 aa)) has biased composition (acidic residues). A coiled-coil region spans residues 292–353 (CDEKEESEEE…LEEGEQRAEE (62 aa)).

Expressed in testis.

It localises to the nucleus. Functionally, regulator of histone epigenetic modifications and chromatin compaction into the sperm head, required for histone-to-protamine (HTP) transition. HTP is a key event in which somatic histones are first replaced by testis-specific histone variants, then transition proteins (TNPs) are incorporated into the spermatid nucleus, and finally protamines (PRMs) replace the TNPs to promote chromatin condensation. The protein is Coiled-coil domain-containing glutamate-rich protein 1 (Ccer1) of Mus musculus (Mouse).